The sequence spans 319 residues: Molybdenum cofactor biosynthesis bifunctional protein (319 aa).

Residues 1 to 145 (MIDVGDKAVT…GKSGHWQRPA (145 aa)) are molybdenum cofactor biosynthesis protein C. Substrate-binding positions include 61-63 (LCH) and 99-100 (ME). Asp114 is a catalytic residue. Residues 146–319 (IAPDVAPTGA…KGADHGTVKG (174 aa)) are molybdenum cofactor biosynthesis protein B.

In the N-terminal section; belongs to the MoaC family. It in the C-terminal section; belongs to the MoaB/Mog family.

The enzyme catalyses (8S)-3',8-cyclo-7,8-dihydroguanosine 5'-triphosphate = cyclic pyranopterin phosphate + diphosphate. It participates in cofactor biosynthesis; molybdopterin biosynthesis. Functionally, catalyzes the conversion of (8S)-3',8-cyclo-7,8-dihydroguanosine 5'-triphosphate to cyclic pyranopterin monophosphate (cPMP). In Synechococcus elongatus (strain ATCC 33912 / PCC 7942 / FACHB-805) (Anacystis nidulans R2), this protein is Molybdenum cofactor biosynthesis bifunctional protein (moaCB).